A 398-amino-acid chain; its full sequence is uncharacterized protein (398 aa).

2 helical membrane-spanning segments follow: residues 31–51 (VVFS…CLLF) and 56–76 (AFIT…FFGC).

This sequence belongs to the chlamydial CPn_0129/CT_036/TC_0306 family.

The protein localises to the cell membrane. This is an uncharacterized protein from Chlamydia muridarum (strain MoPn / Nigg).